A 587-amino-acid polypeptide reads, in one-letter code: ATP-dependent zinc metalloprotease FtsH 2 (587 aa).

Topologically, residues 1–12 are cytoplasmic; that stretch reads MSSDRTREVTKR. Residues 13-33 traverse the membrane as a helical segment; sequence ILMVLFGLWLLQFFFLPPLTT. Residues 34 to 102 lie on the Extracellular side of the membrane; that stretch reads RPTELSYSAF…EQRYEVTRTP (69 aa). A helical membrane pass occupies residues 103-123; sequence WWVTLLPTVLWLAVMVGLFAW. The Cytoplasmic segment spans residues 124–587; that stretch reads AQKRQAGAFG…GDDVRRILSA (464 aa). 192–199 provides a ligand contact to ATP; it reads GPPGTGKT. H416 lines the Zn(2+) pocket. Residue E417 is part of the active site. Residues H420 and D492 each contribute to the Zn(2+) site.

In the central section; belongs to the AAA ATPase family. The protein in the C-terminal section; belongs to the peptidase M41 family. As to quaternary structure, homohexamer. Requires Zn(2+) as cofactor.

Its subcellular location is the cell membrane. Its function is as follows. Acts as a processive, ATP-dependent zinc metallopeptidase for both cytoplasmic and membrane proteins. Plays a role in the quality control of integral membrane proteins. The sequence is that of ATP-dependent zinc metalloprotease FtsH 2 from Symbiobacterium thermophilum (strain DSM 24528 / JCM 14929 / IAM 14863 / T).